The sequence spans 319 residues: uncharacterized protein (319 aa).

The N-terminal stretch at 1–23 is a signal peptide; it reads MFPFRRNVLAFAALLALSSPVLA.

It to H.influenzae HI_0755.

This is an uncharacterized protein from Escherichia coli (strain K12).